An 87-amino-acid chain; its full sequence is Small ribosomal subunit protein bS18 (87 aa).

It belongs to the bacterial ribosomal protein bS18 family. In terms of assembly, part of the 30S ribosomal subunit. Forms a tight heterodimer with protein bS6.

Its function is as follows. Binds as a heterodimer with protein bS6 to the central domain of the 16S rRNA, where it helps stabilize the platform of the 30S subunit. This chain is Small ribosomal subunit protein bS18, found in Sulfurimonas denitrificans (strain ATCC 33889 / DSM 1251) (Thiomicrospira denitrificans (strain ATCC 33889 / DSM 1251)).